A 350-amino-acid polypeptide reads, in one-letter code: Serpentine receptor class beta-12 (350 aa).

Residues 1-21 lie on the Extracellular side of the membrane; that stretch reads MSEANLTECELAYQLTYHPFY. Residue asparagine 5 is glycosylated (N-linked (GlcNAc...) asparagine). A helical membrane pass occupies residues 22 to 42; the sequence is MIAQFWSFFVSLLAMPSLIFF. Residues 43-57 lie on the Cytoplasmic side of the membrane; the sequence is MVEKVFKLPFHGNLK. Residues 58–78 traverse the membrane as a helical segment; sequence FLLVSYFIGTFLFASIICFTF. Residues 79–103 are Extracellular-facing; the sequence is GYHFFVPFFVTSNCDLIINATLFKY. Asparagine 97 is a glycosylation site (N-linked (GlcNAc...) asparagine). Residues 104 to 124 traverse the membrane as a helical segment; it reads GHMIALIFMTIPMILPTAFTV. The Cytoplasmic segment spans residues 125–141; it reads ERFVALKMAHSYEHVRT. The chain crosses the membrane as a helical span at residues 142-162; it reads LLGPVLVLVVIAIDSMFLYDI. Over 163 to 189 the chain is Extracellular; the sequence is YGQEKFDKPFINFILVPATSALQFNSF. Residues 190-210 form a helical membrane-spanning segment; that stretch reads LWYMLYLKITNFICNLILLFI. Residues 211–243 are Cytoplasmic-facing; that stretch reads HKILHQSSRYRRKNVSLSVKYEMQEISQSSRFT. The helical transmembrane segment at 244–264 threads the bilayer; it reads LIVTFTHLLFFGWYVSTILLI. Residues 265-282 are Extracellular-facing; the sequence is RTVGPDFFRGFINYTVMR. Asparagine 277 is a glycosylation site (N-linked (GlcNAc...) asparagine). The helical transmembrane segment at 283 to 303 threads the bilayer; that stretch reads GVYCATPTYNLVIVFIGFKAL. The Cytoplasmic portion of the chain corresponds to 304-350; it reads NHLNFKRNNKVQSTIQIKSTGQEGAENYDNAISNYWDSVYTMNKSKL.

This sequence belongs to the nematode receptor-like protein srb family. In terms of tissue distribution, expressed throughout the head.

It is found in the cell membrane. Its subcellular location is the perikaryon. The protein resides in the cell projection. The protein localises to the dendrite. Functionally, G-protein coupled receptor. Plays a role in the navigational capacity of sperm and promotes the targeting of sperm derived from males to the fertilization site in the uterus of hermaphrodites. The chain is Serpentine receptor class beta-12 from Caenorhabditis elegans.